A 199-amino-acid chain; its full sequence is COMM domain-containing protein 2 (199 aa).

Residues 123–190 enclose the COMM domain; sequence SYHNLEWRLD…QALEEMKTNH (68 aa).

Belongs to the COMM domain-containing protein 2 family. Component of the commander complex consisting of the CCC subcomplex and the retriever subcomplex. Component of the CCC (COMMD/CCDC22/CCDC93) subcomplex consisting of COMMD1, COMMD2, COMMD3, COMMD4, COMMD5, COMMD6, COMMD7, COMMD8, COMMD9, COMMD10, CCDC22 and CCDC93; within the complex forms a heterodimer with COMMD3. Interacts with RELA, RELB, NFKB1/p105, NFKB2/p100. Interacts with CCDC22, CCDC93, SCNN1B, CUL3, CUL4B, CUL5, CUL7. Ubiquitous.

The protein resides in the cytoplasm. Functionally, scaffold protein in the commander complex that is essential for endosomal recycling of transmembrane cargos; the commander complex is composed of the CCC subcomplex and the retriever subcomplex. May modulate activity of cullin-RING E3 ubiquitin ligase (CRL) complexes. May down-regulate activation of NF-kappa-B. The polypeptide is COMM domain-containing protein 2 (COMMD2) (Homo sapiens (Human)).